A 312-amino-acid chain; its full sequence is Ribonuclease HIII (312 aa).

Residues 95-312 enclose the RNase H type-2 domain; that stretch reads MSILGSDEVG…TEKAFRLLKK (218 aa). A divalent metal cation contacts are provided by aspartate 101, glutamate 102, and aspartate 206.

Belongs to the RNase HII family. RnhC subfamily. It depends on Mn(2+) as a cofactor. The cofactor is Mg(2+).

It is found in the cytoplasm. It carries out the reaction Endonucleolytic cleavage to 5'-phosphomonoester.. Endonuclease that specifically degrades the RNA of RNA-DNA hybrids. This chain is Ribonuclease HIII, found in Bacillus mycoides (strain KBAB4) (Bacillus weihenstephanensis).